Consider the following 70-residue polypeptide: Large ribosomal subunit protein eL38 (70 aa).

The protein belongs to the eukaryotic ribosomal protein eL38 family.

The chain is Large ribosomal subunit protein eL38 (RPL38) from Artemia franciscana (Brine shrimp).